We begin with the raw amino-acid sequence, 148 residues long: Deoxyuridine 5'-triphosphate nucleotidohydrolase (148 aa).

Residues 67-69 (RSG), Asn-80, 84-86 (LID), and Met-94 contribute to the substrate site.

The protein belongs to the dUTPase family. Mg(2+) is required as a cofactor.

It catalyses the reaction dUTP + H2O = dUMP + diphosphate + H(+). Its pathway is pyrimidine metabolism; dUMP biosynthesis; dUMP from dCTP (dUTP route): step 2/2. Functionally, this enzyme is involved in nucleotide metabolism: it produces dUMP, the immediate precursor of thymidine nucleotides and it decreases the intracellular concentration of dUTP so that uracil cannot be incorporated into DNA. The polypeptide is Deoxyuridine 5'-triphosphate nucleotidohydrolase (Burkholderia cenocepacia (strain ATCC BAA-245 / DSM 16553 / LMG 16656 / NCTC 13227 / J2315 / CF5610) (Burkholderia cepacia (strain J2315))).